A 350-amino-acid chain; its full sequence is Deoxyribonuclease-2-alpha (350 aa).

A signal peptide spans 1 to 19 (MAAPSSLLLAALLWVPAEA). Cys22 and Cys162 form a disulfide bridge. 4 N-linked (GlcNAc...) asparagine glycosylation sites follow: Asn89, Asn215, Asn269, and Asn293. 2 disulfide bridges follow: Cys270–Cys350 and Cys311–Cys330. The active site involves His298.

This sequence belongs to the DNase II family. In terms of tissue distribution, ubiquitous.

Its subcellular location is the lysosome. The enzyme catalyses Endonucleolytic cleavage to nucleoside 3'-phosphates and 3'-phosphooligonucleotide end-products.. Its function is as follows. Hydrolyzes DNA under acidic conditions with a preference for double-stranded DNA. Plays a major role in the clearance of nucleic acids generated through apoptosis, hence preventing autoinflammation. Necessary for proper fetal development and for definitive erythropoiesis in fetal liver and bone marrow, where it degrades nuclear DNA expelled from erythroid precursor cells. This chain is Deoxyribonuclease-2-alpha (Dnase2), found in Rattus norvegicus (Rat).